A 229-amino-acid polypeptide reads, in one-letter code: Ras-like protein rasV (229 aa).

40–47 contacts GTP; that stretch reads GDGGVGKT. The Effector region signature appears at 62–70; that stretch reads YDPTIEDSY. GTP is bound by residues 87-91 and 146-149; these read DTAGQ and NKSD. Position 226 is a cysteine methyl ester (Cys226). Cys226 carries the S-geranylgeranyl cysteine lipid modification. The propeptide at 227–229 is removed in mature form; it reads KVM.

This sequence belongs to the small GTPase superfamily. Ras family.

The protein localises to the cell membrane. It carries out the reaction GTP + H2O = GDP + phosphate + H(+). Its function is as follows. Ras proteins bind GDP/GTP and possess intrinsic GTPase activity. This is Ras-like protein rasV (rasV) from Dictyostelium discoideum (Social amoeba).